A 463-amino-acid polypeptide reads, in one-letter code: Probable Xaa-Pro aminopeptidase pepP (463 aa).

Aspartate 259, aspartate 270, glutamate 393, and glutamate 433 together coordinate Mn(2+).

Belongs to the peptidase M24B family. Requires Mn(2+) as cofactor.

It catalyses the reaction Release of any N-terminal amino acid, including proline, that is linked to proline, even from a dipeptide or tripeptide.. In terms of biological role, catalyzes the removal of a penultimate prolyl residue from the N-termini of peptides. The polypeptide is Probable Xaa-Pro aminopeptidase pepP (pepP) (Pyrenophora tritici-repentis (strain Pt-1C-BFP) (Wheat tan spot fungus)).